Reading from the N-terminus, the 307-residue chain is Ventral anterior homeobox 2 (307 aa).

Disordered stretches follow at residues 1–70 (MFDQ…DKLL), 155–175 (RTKQKKDQTKDTDKRSSSTSE), and 197–254 (PPPN…PSPR). Positions 25–38 (CRDRGRESKSRTEV) are enriched in basic and acidic residues. A compositionally biased stretch (low complexity) spans 46 to 62 (SSTDTPGTSASTPTSSS). The segment at residues 103–162 (PKRTRTSFTAEQLYRLELEFQRCQYVVGRERTELARQLNLSETQVKVWFQNRRTKQKKDQ) is a DNA-binding region (homeobox). Residues 159–170 (KKDQTKDTDKRS) show a composition bias toward basic and acidic residues. Residues 202 to 249 (LLAHPHPGNGSLLGSPSVSTSSGVSSSTTPPGAGSGTFGLSLSSLSGT) show a composition bias toward low complexity.

The protein belongs to the EMX homeobox family. In terms of tissue distribution, expressed in the anterior neural keel and later in the preoptic area, optic stalk and ventral retina.

Its subcellular location is the nucleus. Transcription factor that may function in dorsoventral specification of the forebrain. Required for closure of the choroid fissure and together with vax1 is required for optic nerve differentiation and to limit retinal development to the optic cup. The sequence is that of Ventral anterior homeobox 2 (vax2) from Danio rerio (Zebrafish).